The primary structure comprises 344 residues: GPALPP motifs-containing protein 1 (344 aa).

The disordered stretch occupies residues 1 to 309; it reads MARDLIGPAL…QERIPFDRDK (309 aa). Ala-2 is modified (N-acetylalanine). Positions 7–12 match the GPALPP motif 1 motif; it reads GPALPP. The residue at position 28 (Ser-28) is a Phosphoserine. Residues 30–35 carry the GPALPP motif 2 motif; it reads GPALPP. Composition is skewed to acidic residues over residues 58-67 and 80-93; these read GNQESEEDDT and DDND…DDDG. Positions 96-101 match the GPALPP motif 3 motif; the sequence is GPALPP. Phosphoserine is present on Ser-109. Residues 111–120 are compositionally biased toward pro residues; that stretch reads PRPIIGPALP. The GPALPP motif 4 motif lies at 116–121; sequence GPALPP. The segment covering 128–137 has biased composition (basic and acidic residues); sequence QKSDKGRDDP. Thr-142 carries the post-translational modification Phosphothreonine. A phosphoserine mark is found at Ser-144 and Ser-145. 4 stretches are compositionally biased toward basic and acidic residues: residues 167–191, 231–265, 273–283, and 291–309; these read EFEK…KPIV, PADR…KRLA, ESKRSESLMDI, and KAAE…DRDK. Lys-275 is covalently cross-linked (Glycyl lysine isopeptide (Lys-Gly) (interchain with G-Cter in SUMO2)). Lys-312 is covalently cross-linked (Glycyl lysine isopeptide (Lys-Gly) (interchain with G-Cter in SUMO2)).

The sequence is that of GPALPP motifs-containing protein 1 (GPALPP1) from Pongo abelii (Sumatran orangutan).